Reading from the N-terminus, the 283-residue chain is Formamidopyrimidine-DNA glycosylase (283 aa).

The active-site Schiff-base intermediate with DNA is Pro2. Residue Glu3 is the Proton donor of the active site. The Proton donor; for beta-elimination activity role is filled by Lys61. Residues His94, Arg113, and Lys159 each coordinate DNA. The segment at 245 to 279 (DAYGREGESCRRCGAVMRREKFMNRSSFYCPKCQP) adopts an FPG-type zinc-finger fold. Catalysis depends on Arg269, which acts as the Proton donor; for delta-elimination activity.

It belongs to the FPG family. Monomer. Zn(2+) is required as a cofactor.

The enzyme catalyses Hydrolysis of DNA containing ring-opened 7-methylguanine residues, releasing 2,6-diamino-4-hydroxy-5-(N-methyl)formamidopyrimidine.. It catalyses the reaction 2'-deoxyribonucleotide-(2'-deoxyribose 5'-phosphate)-2'-deoxyribonucleotide-DNA = a 3'-end 2'-deoxyribonucleotide-(2,3-dehydro-2,3-deoxyribose 5'-phosphate)-DNA + a 5'-end 5'-phospho-2'-deoxyribonucleoside-DNA + H(+). Involved in base excision repair of DNA damaged by oxidation or by mutagenic agents. Acts as a DNA glycosylase that recognizes and removes damaged bases. Has a preference for oxidized purines, such as 7,8-dihydro-8-oxoguanine (8-oxoG). Has AP (apurinic/apyrimidinic) lyase activity and introduces nicks in the DNA strand. Cleaves the DNA backbone by beta-delta elimination to generate a single-strand break at the site of the removed base with both 3'- and 5'-phosphates. The sequence is that of Formamidopyrimidine-DNA glycosylase from Mycobacterium avium (strain 104).